A 632-amino-acid chain; its full sequence is tRNA uridine 5-carboxymethylaminomethyl modification enzyme MnmG (632 aa).

FAD contacts are provided by residues 16-21 (GAGHAG), Val128, and Ser183. The tract at residues 206–225 (PRVNGNTIDYSKTEEEPGDK) is disordered. Over residues 216-225 (SKTEEEPGDK) the composition is skewed to basic and acidic residues. Residue 277-291 (GPRYCPSIEDKVVRF) coordinates NAD(+). FAD is bound at residue Gln374.

This sequence belongs to the MnmG family. As to quaternary structure, homodimer. Heterotetramer of two MnmE and two MnmG subunits. It depends on FAD as a cofactor.

The protein localises to the cytoplasm. Functionally, NAD-binding protein involved in the addition of a carboxymethylaminomethyl (cmnm) group at the wobble position (U34) of certain tRNAs, forming tRNA-cmnm(5)s(2)U34. The polypeptide is tRNA uridine 5-carboxymethylaminomethyl modification enzyme MnmG (Lactobacillus acidophilus (strain ATCC 700396 / NCK56 / N2 / NCFM)).